A 304-amino-acid polypeptide reads, in one-letter code: HTH-type transcriptional regulator BenM (304 aa).

Positions M1–T58 constitute an HTH lysR-type domain. A DNA-binding region (H-T-H motif) is located at residues F18–Q37. The benzoate site is built by S99 and L104. Cis,cis-muconate is bound at residue S99. T128 is a binding site for cis,cis-muconate. Benzoate is bound by residues F144, R160, and N202. F203 lines the cis,cis-muconate pocket. Y293 contributes to the benzoate binding site.

Belongs to the LysR transcriptional regulatory family. In terms of assembly, homotetramer; dimer of dimers. The dimers can also associate to form linear, higher oligomers (in vitro).

In terms of biological role, positive regulator of the ben and cat genes for benzoate degradation. BenM is necessary for ben gene expression but not for expression of the cat genes, which can be regulated by CatM. Binds to the inducers cis,cis-muconate and benzoate. In Acinetobacter baylyi (strain ATCC 33305 / BD413 / ADP1), this protein is HTH-type transcriptional regulator BenM (benM).